A 293-amino-acid polypeptide reads, in one-letter code: Elongation factor Ts (293 aa).

Residues 80–83 (TDFV) are involved in Mg(2+) ion dislocation from EF-Tu.

Belongs to the EF-Ts family.

It is found in the cytoplasm. Its function is as follows. Associates with the EF-Tu.GDP complex and induces the exchange of GDP to GTP. It remains bound to the aminoacyl-tRNA.EF-Tu.GTP complex up to the GTP hydrolysis stage on the ribosome. This chain is Elongation factor Ts, found in Paraburkholderia xenovorans (strain LB400).